The chain runs to 118 residues: UPF0102 protein PC1_0307 (118 aa).

This sequence belongs to the UPF0102 family.

This Pectobacterium carotovorum subsp. carotovorum (strain PC1) protein is UPF0102 protein PC1_0307.